Consider the following 283-residue polypeptide: 2,3,4,5-tetrahydropyridine-2,6-dicarboxylate N-succinyltransferase (283 aa).

Positions 107 and 144 each coordinate substrate.

The protein belongs to the transferase hexapeptide repeat family. In terms of assembly, homotrimer.

The protein localises to the cytoplasm. The enzyme catalyses (S)-2,3,4,5-tetrahydrodipicolinate + succinyl-CoA + H2O = (S)-2-succinylamino-6-oxoheptanedioate + CoA. The protein operates within amino-acid biosynthesis; L-lysine biosynthesis via DAP pathway; LL-2,6-diaminopimelate from (S)-tetrahydrodipicolinate (succinylase route): step 1/3. This chain is 2,3,4,5-tetrahydropyridine-2,6-dicarboxylate N-succinyltransferase, found in Rhodospirillum rubrum (strain ATCC 11170 / ATH 1.1.1 / DSM 467 / LMG 4362 / NCIMB 8255 / S1).